A 207-amino-acid polypeptide reads, in one-letter code: Ribosomal RNA small subunit methyltransferase G (207 aa).

Residues glycine 76, glutamine 81, 127–128 (VE), and arginine 141 contribute to the S-adenosyl-L-methionine site.

Belongs to the methyltransferase superfamily. RNA methyltransferase RsmG family.

It is found in the cytoplasm. The enzyme catalyses guanosine(527) in 16S rRNA + S-adenosyl-L-methionine = N(7)-methylguanosine(527) in 16S rRNA + S-adenosyl-L-homocysteine. Functionally, specifically methylates the N7 position of guanine in position 527 of 16S rRNA. The chain is Ribosomal RNA small subunit methyltransferase G from Neisseria meningitidis serogroup C / serotype 2a (strain ATCC 700532 / DSM 15464 / FAM18).